The primary structure comprises 152 residues: UPF0756 membrane protein EF_1246 (152 aa).

The next 4 helical transmembrane spans lie at 4–24 (WLFL…SLLI), 52–72 (LGVT…QIGL), 85–105 (WLGI…VGLI), and 115–135 (LVFG…GPII).

Belongs to the UPF0756 family.

The protein localises to the cell membrane. The chain is UPF0756 membrane protein EF_1246 from Enterococcus faecalis (strain ATCC 700802 / V583).